A 141-amino-acid chain; its full sequence is NADH dehydrogenase [ubiquinone] 1 alpha subcomplex subunit 11 (141 aa).

Alanine 2 bears the N-acetylalanine mark. 2 consecutive transmembrane segments (helical) span residues 21-43 (KAYSTTSIASVAGLTAAAYRVTL) and 58-80 (QYTFTAAAVGAVFGLTTCISAHV).

This sequence belongs to the complex I NDUFA11 subunit family. As to quaternary structure, complex I is composed of 45 different subunits.

It localises to the mitochondrion inner membrane. Its function is as follows. Accessory subunit of the mitochondrial membrane respiratory chain NADH dehydrogenase (Complex I), that is believed not to be involved in catalysis. Complex I functions in the transfer of electrons from NADH to the respiratory chain. The immediate electron acceptor for the enzyme is believed to be ubiquinone. The chain is NADH dehydrogenase [ubiquinone] 1 alpha subcomplex subunit 11 (NDUFA11) from Homo sapiens (Human).